Here is a 1135-residue protein sequence, read N- to C-terminus: MRRLSLWWLLSRVCLLLPPPCALVLAGVPSSSSHPQPCQILKRIGHAVRVGAVHLQPWTTAPRAASRAQEGGRAGAQRDDPESGTWRPPAPSQGARWLGSALHGRGPPGSRKLGEGAGAETLWPRDALLFAVENLNRVEGLLPYNLSLEVVMAIEAGLGDLPLMPFSSPSSPWSSDPFSFLQSVCHTVVVQGVSALLAFPQSQGEMMELDLVSSVLHIPVLSIVRHEFPRESQNPLHLQLSLENSLSSDADVTVSILTMNNWYNFSLLLCQEDWNITDFLLLTENNSKFHLESVINITANLSSTKDLLSFLQVQMDNIRNSTPTMVMFGCDMDSIRQIFEMSTQFGLSPPELHWVLGDSQNVEELRTEGLPLGLIAHGKTTQSVFEYYVQDAMELVARAVATATMIQPELALLPSTMNCMDVKTTNLTSGQYLSRFLANTTFRGLSGSIKVKGSTIISSENNFFIWNLQHDPMGKPMWTRLGSWQGGRIVMDSGIWPEQAQRHKTHFQHPNKLHLRVVTLIEHPFVFTREVDDEGLCPAGQLCLDPMTNDSSMLDRLFSSLHSSNDTVPIKFKKCCYGYCIDLLEQLAEDMNFDFDLYIVGDGKYGAWKNGHWTGLVGDLLSGTANMAVTSFSINTARSQVIDFTSPFFSTSLGILVRTRDTAAPIGAFMWPLHWTMWLGIFVALHITAIFLTLYEWKSPFGMTPKGRNRNKVFSFSSALNVCYALLFGRTAAIKPPKCWTGRFLMNLWAIFCMFCLSTYTANLAAVMVGEKIYEELSGIHDPKLHHPSQGFRFGTVRESSAEDYVRQSFPEMHEYMRRYNVPATPDGVQYLKNDPEKLDAFIMDKALLDYEVSIDADCKLLTVGKPFAIEGYGIGLPPNSPLTSNISELISQYKSHGFMDVLHDKWYKVVPCGKRSFAVTETLQMGIKHFSGLFVLLCIGFGLSILTTIGEHIVHRLLLPRIKNKSKLQYWLHTSQRFHRALNTSFVEEKQPRSKTKRVEKSRWRRWTCKTEGDSELSLFPRSNLGPQQLMVWNTSNLSHDNQRKYIFNDEEGQNQLGTQAHQDIPLPQRRRELPASLTTNGKADSLNVTRSSVIQELSELEKQIQVIRQELQLAVSRKTELEEYQKTNRTCES.

An N-terminal signal peptide occupies residues 1–23; sequence MRRLSLWWLLSRVCLLLPPPCAL. Residues 24 to 674 lie on the Extracellular side of the membrane; that stretch reads VLAGVPSSSS…PIGAFMWPLH (651 aa). Positions 60–117 are disordered; sequence TAPRAASRAQEGGRAGAQRDDPESGTWRPPAPSQGARWLGSALHGRGPPGSRKLGEGA. N-linked (GlcNAc...) asparagine glycosylation is found at N145, N264, N275, N285, N296, N300, N426, N439, N549, and N565. 2 disulfide bridges follow: C537–C575 and C543–C576. Residues S631, S633, and R638 each contribute to the glycine site. Residues S633 and R638 each coordinate D-serine. The helical transmembrane segment at 675–694 threads the bilayer; the sequence is WTMWLGIFVALHITAIFLTL. Residues 695–715 are Cytoplasmic-facing; the sequence is YEWKSPFGMTPKGRNRNKVFS. Positions 716 to 727 form an intramembrane region, discontinuously helical; it reads FSSALNVCYALL. Over 728 to 741 the chain is Cytoplasmic; it reads FGRTAAIKPPKCWT. The chain crosses the membrane as a helical span at residues 742–761; the sequence is GRFLMNLWAIFCMFCLSTYT. Residues 762–932 are Extracellular-facing; that stretch reads ANLAAVMVGE…TLQMGIKHFS (171 aa). S801 contacts glycine. The D-serine site is built by S801, A802, and D845. Residue D845 coordinates glycine. C859 and C913 are oxidised to a cystine. N886 is a glycosylation site (N-linked (GlcNAc...) asparagine). The chain crosses the membrane as a helical span at residues 933 to 948; the sequence is GLFVLLCIGFGLSILT. Over 949 to 1135 the chain is Cytoplasmic; it reads TIGEHIVHRL…YQKTNRTCES (187 aa). A PPP2CB binding site region spans residues 951 to 987; sequence GEHIVHRLLLPRIKNKSKLQYWLHTSQRFHRALNTSF. Residues 1080–1129 are a coiled coil; sequence TTNGKADSLNVTRSSVIQELSELEKQIQVIRQELQLAVSRKTELEEYQKT. Residues 1082–1115 are GIT1-binding; sequence NGKADSLNVTRSSVIQELSELEKQIQVIRQELQL.

The protein belongs to the glutamate-gated ion channel (TC 1.A.10.1) family. NR3A/GRIN3A subfamily. As to quaternary structure, heterotetramer. Forms heterotetrameric channels composed of two GluN1/zeta subunits (GRIN1), and two identical GluN3 subunits (GRIN3A or GRIN3B) (in vitro). Can also form heterotetrameric channels that contain at least two GluN1 subunits and at least a combination of one GluN2 and one GluN3 subunits (in vitro). Does not form functional homomeric channels. Found in a complex with GRIN1, GRIN2A or GRIN2B and PPP2CB. Probably interacts with PPP2CB. No complex with PPP2CB is detected when NMDARs are stimulated by NMDA. Interacts (via C-terminus) with GIT1, but not with GRIA1/GluA1, nor with synaptophysin/SYP; this interaction competes with GIT1 interaction with ARHGEF7/beta-PIX. In terms of processing, N-glycosylated. As to expression, isoform 1 and isoform 2 are expressed in olfactory bulb, frontal occipital, entorhinal and pyriform cortices, hippocampus, striatum, thalamus, cerebellum and spinal cord.

It is found in the cell membrane. The protein localises to the postsynaptic cell membrane. The protein resides in the postsynaptic density. The enzyme catalyses Ca(2+)(in) = Ca(2+)(out). It catalyses the reaction Na(+)(in) = Na(+)(out). Excitatory glycine receptors are inhibited by D-serine at a concentrion of 10uM. Component of a non-conventional N-methyl-D-aspartate (NMDA) receptors (NMDARs) that function as heterotetrameric, ligand-gated cation channels with low calcium permeability and low voltage-dependent block by Mg(2+). During the development of neural circuits, participates in the synaptic refinement period, restricting spine maturation and growth. Forms glutamatergic receptor complexes with GluN1 and GluN2 subunits which are activated by glycine binding to the GluN1 and GluN3 subunits and L-glutamate binding to GluN2 subunits. Forms excitatory glycinergic receptor complexes with GluN1 alone which are activated by glycine binding to the GluN1 and GluN3 subunits. GluN3A subunit also binds D-serine. Each GluN3 subunit confers differential attributes to channel properties, including activation, deactivation and desensitization kinetics, pH sensitivity, Ca2(+) permeability, and binding to allosteric modulators. By competing with GIT1 interaction with ARHGEF7/beta-PIX, may reduce GIT1/ARHGEF7-regulated local activation of RAC1, hence affecting signaling and limiting the maturation and growth of inactive synapses. The polypeptide is Glutamate receptor ionotropic, NMDA 3A (Rattus norvegicus (Rat)).